Here is a 196-residue protein sequence, read N- to C-terminus: Molybdenum cofactor guanylyltransferase (196 aa).

Residues 10–12 (LAG), lysine 23, asparagine 51, aspartate 69, and aspartate 99 contribute to the GTP site. Residue aspartate 99 participates in Mg(2+) binding.

Belongs to the MobA family. In terms of assembly, monomer. It depends on Mg(2+) as a cofactor.

The protein resides in the cytoplasm. The catalysed reaction is Mo-molybdopterin + GTP + H(+) = Mo-molybdopterin guanine dinucleotide + diphosphate. Functionally, transfers a GMP moiety from GTP to Mo-molybdopterin (Mo-MPT) cofactor (Moco or molybdenum cofactor) to form Mo-molybdopterin guanine dinucleotide (Mo-MGD) cofactor. In Shewanella loihica (strain ATCC BAA-1088 / PV-4), this protein is Molybdenum cofactor guanylyltransferase.